The sequence spans 82 residues: Small ribosomal subunit protein uS12 (82 aa).

3-methylthioaspartic acid is present on D59.

Belongs to the universal ribosomal protein uS12 family. In terms of assembly, part of the 30S ribosomal subunit. Contacts proteins S8 and S17. May interact with IF1 in the 30S initiation complex.

Functionally, with S4 and S5 plays an important role in translational accuracy. Its function is as follows. Interacts with and stabilizes bases of the 16S rRNA that are involved in tRNA selection in the A site and with the mRNA backbone. Located at the interface of the 30S and 50S subunits, it traverses the body of the 30S subunit contacting proteins on the other side and probably holding the rRNA structure together. The combined cluster of proteins S8, S12 and S17 appears to hold together the shoulder and platform of the 30S subunit. This is Small ribosomal subunit protein uS12 (rpsL) from Actinobacillus pleuropneumoniae (Haemophilus pleuropneumoniae).